Here is a 155-residue protein sequence, read N- to C-terminus: Histone H2B.4 (155 aa).

Basic and acidic residues predominate over residues 1 to 28; sequence MAPKTKEEKPASEAVEPKAEAKPKAEKA. Residues 1-62 form a disordered region; sequence MAPKTKEEKP…GDKKKKKAKV (62 aa). Over residues 29 to 40 the composition is skewed to basic residues; the sequence is PKKKEKKAPAKK. A Glycyl lysine isopeptide (Lys-Gly) (interchain with G-Cter in ubiquitin) cross-link involves residue Lys-151.

The protein belongs to the histone H2B family. As to quaternary structure, the nucleosome is a histone octamer containing two molecules each of H2A, H2B, H3 and H4 assembled in one H3-H4 heterotetramer and two H2A-H2B heterodimers. The octamer wraps approximately 147 bp of DNA. Post-translationally, monoubiquitinated to form H2BK143ub1; may give a specific tag for epigenetic transcriptional activation.

It localises to the nucleus. It is found in the chromosome. Core component of nucleosome. Nucleosomes wrap and compact DNA into chromatin, limiting DNA accessibility to the cellular machineries which require DNA as a template. Histones thereby play a central role in transcription regulation, DNA repair, DNA replication and chromosomal stability. DNA accessibility is regulated via a complex set of post-translational modifications of histones, also called histone code, and nucleosome remodeling. This chain is Histone H2B.4, found in Volvox carteri (Green alga).